The primary structure comprises 580 residues: F-box only protein 24 (580 aa).

The F-box domain maps to 36-82 (PISIQLFPPELVEHIISFLPVRDLVALGQTCRYFHEVCDAEGVWRRI). The RCC1 repeat unit spans residues 376–425 (GRIFMQGNNRYGQLGTGDKMDRGEPTQVRYLQRPITLWCGLNHSLVLSQS).

Directly interacts with SKP1 and CUL1.

Functionally, substrate-recognition component of the SCF (SKP1-CUL1-F-box protein)-type E3 ubiquitin ligase complex. The chain is F-box only protein 24 (FBXO24) from Macaca fascicularis (Crab-eating macaque).